A 64-amino-acid polypeptide reads, in one-letter code: Large ribosomal subunit protein bL35 (64 aa).

The segment covering 1 to 28 (MPKMKTKSGAAKRFKKTAGGLKHKHAFK) has biased composition (basic residues). Residues 1–64 (MPKMKTKSGA…ARVERSLRLR (64 aa)) form a disordered region. The span at 53–64 (DVARVERSLRLR) shows a compositional bias: basic and acidic residues.

Belongs to the bacterial ribosomal protein bL35 family.

This chain is Large ribosomal subunit protein bL35, found in Pseudomonas aeruginosa (strain LESB58).